A 380-amino-acid chain; its full sequence is MPSPPPTPETATASDRTATPAPGMPILAVDAMGGDSAPGMVIAGLDIAAERHPNARFEVFGDAVQIDELVRLSKRLRNRVSIRPTTEIIPNELKPTAALRLRDASLRRAIDAVANGEAAGVISAGNTGAMLALAKIVLKTMSGIDRPAMAAIGPSARGDVVMLDLGANVVCDARNLVEFAVMGELFARTVLGLPHPTIGLLNVGSEEMKGDETLRRAAEALRESPIGPQFRGFIEGHDIAGGTVDVVVTDGFTGNVALKTGEGALRLVGDLLRRVFSANIASRLAYLLARPGLTRLREWLDPRRYNGAVLLGLNGVVVKSHGGADAEGFAHAVDVAMDMIVNRFNDRIRDDLGRHADRERLASDAFRATPPASATSVTTG.

Residues methionine 1–glycine 23 are disordered.

It belongs to the PlsX family. Homodimer. Probably interacts with PlsY.

It localises to the cytoplasm. The enzyme catalyses a fatty acyl-[ACP] + phosphate = an acyl phosphate + holo-[ACP]. It functions in the pathway lipid metabolism; phospholipid metabolism. Catalyzes the reversible formation of acyl-phosphate (acyl-PO(4)) from acyl-[acyl-carrier-protein] (acyl-ACP). This enzyme utilizes acyl-ACP as fatty acyl donor, but not acyl-CoA. The chain is Phosphate acyltransferase from Acidiphilium cryptum (strain JF-5).